The chain runs to 498 residues: ATP synthase subunit beta, chloroplastic (498 aa).

ATP is bound at residue 172-179 (GGAGVGKT).

It belongs to the ATPase alpha/beta chains family. In terms of assembly, F-type ATPases have 2 components, CF(1) - the catalytic core - and CF(0) - the membrane proton channel. CF(1) has five subunits: alpha(3), beta(3), gamma(1), delta(1), epsilon(1). CF(0) has four main subunits: a(1), b(1), b'(1) and c(9-12).

Its subcellular location is the plastid. It is found in the chloroplast thylakoid membrane. The enzyme catalyses ATP + H2O + 4 H(+)(in) = ADP + phosphate + 5 H(+)(out). In terms of biological role, produces ATP from ADP in the presence of a proton gradient across the membrane. The catalytic sites are hosted primarily by the beta subunits. In Coffea arabica (Arabian coffee), this protein is ATP synthase subunit beta, chloroplastic.